Reading from the N-terminus, the 570-residue chain is Sulfite reductase [NADPH] hemoprotein beta-component (570 aa).

[4Fe-4S] cluster-binding residues include cysteine 434, cysteine 440, cysteine 479, and cysteine 483. Position 483 (cysteine 483) interacts with siroheme.

Belongs to the nitrite and sulfite reductase 4Fe-4S domain family. As to quaternary structure, alpha(8)-beta(8). The alpha component is a flavoprotein, the beta component is a hemoprotein. It depends on siroheme as a cofactor. The cofactor is [4Fe-4S] cluster.

The enzyme catalyses hydrogen sulfide + 3 NADP(+) + 3 H2O = sulfite + 3 NADPH + 4 H(+). Its pathway is sulfur metabolism; hydrogen sulfide biosynthesis; hydrogen sulfide from sulfite (NADPH route): step 1/1. In terms of biological role, component of the sulfite reductase complex that catalyzes the 6-electron reduction of sulfite to sulfide. This is one of several activities required for the biosynthesis of L-cysteine from sulfate. The chain is Sulfite reductase [NADPH] hemoprotein beta-component from Shigella dysenteriae serotype 1 (strain Sd197).